The primary structure comprises 151 residues: Conidium-specific protein (151 aa).

The disordered stretch occupies residues 1-72 (MAKPHCSSRS…FSGDPDSEVE (72 aa)). The segment covering 48–60 (RKDNSADKGDTLR) has biased composition (basic and acidic residues).

This Emericella nidulans (strain FGSC A4 / ATCC 38163 / CBS 112.46 / NRRL 194 / M139) (Aspergillus nidulans) protein is Conidium-specific protein (SpoC1-C1D).